We begin with the raw amino-acid sequence, 512 residues long: 2-isopropylmalate synthase (512 aa).

The Pyruvate carboxyltransferase domain maps to 5–267 (LYIFDTTLRD…DSRVDATQIV (263 aa)). 4 residues coordinate Mn(2+): aspartate 14, histidine 202, histidine 204, and asparagine 238. The interval 393 to 512 (KLVSLKVVSE…EEKMNAQAAA (120 aa)) is regulatory domain.

Belongs to the alpha-IPM synthase/homocitrate synthase family. LeuA type 1 subfamily. In terms of assembly, homodimer. Mn(2+) is required as a cofactor.

Its subcellular location is the cytoplasm. The catalysed reaction is 3-methyl-2-oxobutanoate + acetyl-CoA + H2O = (2S)-2-isopropylmalate + CoA + H(+). It participates in amino-acid biosynthesis; L-leucine biosynthesis; L-leucine from 3-methyl-2-oxobutanoate: step 1/4. Catalyzes the condensation of the acetyl group of acetyl-CoA with 3-methyl-2-oxobutanoate (2-ketoisovalerate) to form 3-carboxy-3-hydroxy-4-methylpentanoate (2-isopropylmalate). This is 2-isopropylmalate synthase from Chromobacterium violaceum (strain ATCC 12472 / DSM 30191 / JCM 1249 / CCUG 213 / NBRC 12614 / NCIMB 9131 / NCTC 9757 / MK).